We begin with the raw amino-acid sequence, 118 residues long: Large ribosomal subunit protein bL20 (118 aa).

This sequence belongs to the bacterial ribosomal protein bL20 family.

In terms of biological role, binds directly to 23S ribosomal RNA and is necessary for the in vitro assembly process of the 50S ribosomal subunit. It is not involved in the protein synthesizing functions of that subunit. In Trichormus variabilis (strain ATCC 29413 / PCC 7937) (Anabaena variabilis), this protein is Large ribosomal subunit protein bL20.